Consider the following 268-residue polypeptide: MASIELRNVQTELAAKNLQFKVLTEKFLEQRKELFDAKKTDSNVEYVECLSEKLRVATERISDLEKETKEGKQVANEEIGRLEKLLREAQQKRDAKIDESYQTFLRIELLVANLGESTDPENEKRIKNLMPAAKTGIPPEGVLRLTINALDSAARESKKKTMAIESLTKQVDDANKLTEVYMKRLEELEDKHRFEEALTLKIQAMMIETTGQLEAQKKIIADLQKKNDDLMKEEEGEEDYEEEENYEVEEDFEDEEEYDEEGEEEDYE.

Residues 171–243 are a coiled coil; it reads VDDANKLTEV…EEGEEDYEEE (73 aa). The segment at 229–268 is disordered; it reads DLMKEEEGEEDYEEEENYEVEEDFEDEEEYDEEGEEEDYE. Over residues 231-268 the composition is skewed to acidic residues; that stretch reads MKEEEGEEDYEEEENYEVEEDFEDEEEYDEEGEEEDYE.

The protein localises to the nucleus. Plays a role in meiosis, germline development and oocyte morphogenesis. May play a role in DNA replication. In the germline, involved in the maintenance of transition zone nuclei and in chromosome structure and organization, but not required for mitotic proliferation. The protein is Protein atz-1 of Caenorhabditis elegans.